Here is a 457-residue protein sequence, read N- to C-terminus: Flavohemoprotein-1 (457 aa).

Residues 2 to 157 enclose the Globin domain; sequence ALSEDTIKAV…LADLLIKREE (156 aa). Residue histidine 106 participates in heme b binding. Residues tyrosine 116 and glutamate 156 each act as charge relay system in the active site. The tract at residues 168-456 is reductase; the sequence is GGWRQTRTFR…FEMFGPFKAS (289 aa). Residues 171 to 278 form the FAD-binding FR-type domain; the sequence is RQTRTFRVEE…APPYGDFFLR (108 aa). FAD-binding positions include tyrosine 210 and 227–230; that span reads RQYS. NADP(+) is bound at residue 320–325; the sequence is GIGQTP. Residue 449-452 coordinates FAD; the sequence is MFGP.

Belongs to the globin family. Two-domain flavohemoproteins subfamily. It in the C-terminal section; belongs to the flavoprotein pyridine nucleotide cytochrome reductase family. Monomer. Heme b serves as cofactor. FAD is required as a cofactor.

The enzyme catalyses 2 nitric oxide + NADPH + 2 O2 = 2 nitrate + NADP(+) + H(+). It catalyses the reaction 2 nitric oxide + NADH + 2 O2 = 2 nitrate + NAD(+) + H(+). Its function is as follows. Flavohemoprotein involved in nitric oxide (NO) detoxification in an aerobic process, termed nitric oxide dioxygenase (NOD) reaction that utilizes O(2) and NAD(P)H to convert NO to nitrate, which protects the protozoan parasite from various noxious nitrogen compounds. Therefore, plays a central role in the inducible response to nitrosative stress. May also be involved in O(2) detoxification. The protein is Flavohemoprotein-1 (hmpA-1) of Giardia intestinalis (strain P15) (Giardia lamblia).